We begin with the raw amino-acid sequence, 91 residues long: CRISPR-associated endoribonuclease Cas2 2 (91 aa).

Aspartate 10 lines the Mg(2+) pocket.

Belongs to the CRISPR-associated endoribonuclease Cas2 protein family. As to quaternary structure, homodimer, forms a heterotetramer with a Cas1 homodimer. Mg(2+) is required as a cofactor.

In terms of biological role, CRISPR (clustered regularly interspaced short palindromic repeat), is an adaptive immune system that provides protection against mobile genetic elements (viruses, transposable elements and conjugative plasmids). CRISPR clusters contain sequences complementary to antecedent mobile elements and target invading nucleic acids. CRISPR clusters are transcribed and processed into CRISPR RNA (crRNA). Functions as a ssRNA-specific endoribonuclease. Involved in the integration of spacer DNA into the CRISPR cassette. This chain is CRISPR-associated endoribonuclease Cas2 2, found in Thermodesulfovibrio yellowstonii (strain ATCC 51303 / DSM 11347 / YP87).